The sequence spans 465 residues: Nucleolar and spindle-associated protein 1 (465 aa).

Residues 32–61 (ADKLLRALKAHLKNEARKENENQDEIQTSA) adopt a coiled-coil conformation. 3 disordered regions span residues 44-123 (KNEA…QNHS), 148-207 (VEVP…TPNF), and 252-294 (GVPA…GSAK). The segment covering 56–75 (EIQTSASSCDEPEIQTSSQE) has biased composition (polar residues). Over residues 76–86 (QAEREPDDHVT) the composition is skewed to basic and acidic residues. Positions 87–96 (KTRGRRKTVH) are enriched in basic residues. Phosphoserine is present on serine 152. A compositionally biased stretch (polar residues) spans 154 to 166 (PNESQGDENTVSS). A compositionally biased stretch (basic and acidic residues) spans 169–179 (HGIDGNEDPRV). Residue threonine 204 is modified to Phosphothreonine. The interval 262-405 (GRLSVACTPG…HKGKLKPWGQ (144 aa)) is interaction with microtubules. Position 265 is a phosphoserine (serine 265). Phosphothreonine is present on threonine 269. A phosphoserine mark is found at serine 272, serine 292, serine 299, and serine 334. The interval 308-338 (SAATKDNEHKRSLTKTPARKSPHVTTSVNTP) is disordered. Threonine 337, threonine 361, and threonine 372 each carry phosphothreonine. A phosphoserine mark is found at serine 375 and serine 386. Positions 396–454 (HKGKLKPWGQSKENNSLHEHVNRVSFHKKTYKQPRLQTREEQRKKHERERKEKKEKVLG) are disordered. The KEN box motif lies at 407–413 (KENNSLH). Residues 430–457 (RLQTREEQRKKHERERKEKKEKVLGVRR) are a coiled coil. Basic and acidic residues predominate over residues 432–453 (QTREEQRKKHERERKEKKEKVL).

It belongs to the NUSAP family. Interacts with DNA and microtubules. Microtubule bundling is inhibited by IPO7, KPNA2 and KPNB1 while association with DNA is also inhibited by IPO7 and KPNA2. Ubiquitinated. Ubiquitination by FZR1 may lead to proteasome-dependent degradation of this protein.

Its subcellular location is the cytoplasm. It is found in the nucleus. The protein localises to the nucleolus. It localises to the cytoskeleton. The protein resides in the spindle. Its subcellular location is the chromosome. Microtubule-associated protein with the capacity to bundle and stabilize microtubules. May associate with chromosomes and promote the organization of mitotic spindle microtubules around them. The polypeptide is Nucleolar and spindle-associated protein 1 (NUSAP1) (Bos taurus (Bovine)).